Consider the following 102-residue polypeptide: ATP-dependent Clp protease adapter protein ClpS (102 aa).

It belongs to the ClpS family. In terms of assembly, binds to the N-terminal domain of the chaperone ClpA.

In terms of biological role, involved in the modulation of the specificity of the ClpAP-mediated ATP-dependent protein degradation. The sequence is that of ATP-dependent Clp protease adapter protein ClpS from Dechloromonas aromatica (strain RCB).